The chain runs to 610 residues: Calmegin (610 aa).

An N-terminal signal peptide occupies residues 1–19; that stretch reads MHFQAFWLCLGLLFISINA. Residues 20–471 are Lumenal-facing; sequence EFMDDDVETE…LMAAAEGHPW (452 aa). K128 carries the N6-acetyllysine modification. C151 and C185 are joined by a disulfide. A disordered region spans residues 258-338; that stretch reads VPPIKPPKEI…KPDDWNEDTD (81 aa). Over residues 263 to 284 the composition is skewed to basic and acidic residues; the sequence is PPKEIEDPNDKKPEEWDERAKI. Tandem repeats lie at residues 267–280, 284–297, 303–316, 322–335, 339–352, 356–369, 370–383, and 384–397. Residues 317–332 show a composition bias toward basic and acidic residues; the sequence is DEPKFIPDPNAEKPDD. Positions 317 to 350 are interaction with PPIB; that stretch reads DEPKFIPDPNAEKPDDWNEDTDGEWEAPQILNPA. Residues C351 and C355 are joined by a disulfide bond. A helical transmembrane segment spans residues 472 to 492; it reads LWLIYLVTAGVPIALITSFCW. Residues 493-610 lie on the Cytoplasmic side of the membrane; that stretch reads PRKVKKKHKD…SVRKRRVRKD (118 aa). The segment covering 521-548 has biased composition (basic and acidic residues); sequence QEEKEEKAALEKPMDLEEEKKQNDGEML. The segment at 521-610 is disordered; sequence QEEKEEKAAL…SVRKRRVRKD (90 aa). Residues 549–571 show a composition bias toward acidic residues; it reads EKEEESEPEEKSEEEIEIIEGQE. Phosphoserine occurs at positions 560, 576, 579, 581, 591, 594, and 601. A compositionally biased stretch (basic residues) spans 601–610; that stretch reads SVRKRRVRKD.

It belongs to the calreticulin family. In terms of assembly, interacts with PPIB. Interacts with ADAM2. Interacts with PDILT. Detected in testis (at protein level). Detected in testis.

It is found in the endoplasmic reticulum membrane. Its function is as follows. Functions during spermatogenesis as a chaperone for a range of client proteins that are important for sperm adhesion onto the egg zona pellucida and for subsequent penetration of the zona pellucida. Required for normal sperm migration from the uterus into the oviduct. Required for normal male fertility. Binds calcium ions. The polypeptide is Calmegin (CLGN) (Homo sapiens (Human)).